The following is a 461-amino-acid chain: D-phenylhydantoinase (461 aa).

The a divalent metal cation site is built by His59, His61, and Lys151. At Lys151 the chain carries N6-carboxylysine. Tyr156 provides a ligand contact to substrate. Residues His182 and His239 each contribute to the a divalent metal cation site. Ser286 contacts substrate. Residue Asp313 participates in a divalent metal cation binding. Asn335 contributes to the substrate binding site.

This sequence belongs to the metallo-dependent hydrolases superfamily. Hydantoinase/dihydropyrimidinase family. In terms of assembly, homotetramer. A divalent metal cation is required as a cofactor. In terms of processing, carboxylation allows a single lysine to coordinate two divalent metal cations.

It catalyses the reaction D-5-phenylhydantoin + H2O = N-carbamoyl-D-phenylglycine + H(+). Its function is as follows. Catalyzes the stereospecific hydrolysis of the cyclic amide bond of D-hydantoin derivatives with an aromatic side chains at the 5'-position. Has no activity on dihydropyrimidines. The physiological function is unknown. This chain is D-phenylhydantoinase, found in Escherichia coli (strain 55989 / EAEC).